A 172-amino-acid polypeptide reads, in one-letter code: MDLKSLIRDIPDFPKPGIVFRDITTLLNHPQGLRYTIDTLTAKCRDYGLSPDYIVGMESRGFLFGVPLAYQLEAGFIPVRKPGKLPAAVHSIEYDLEYGSDSLEIHQDAVASHHKVLIVDDLIATGGTAKATAGLLEKIGCEVLGFAFIIELIDLGGREKLPDLPIITLIDY.

Belongs to the purine/pyrimidine phosphoribosyltransferase family. Homodimer.

The protein resides in the cytoplasm. The catalysed reaction is AMP + diphosphate = 5-phospho-alpha-D-ribose 1-diphosphate + adenine. The protein operates within purine metabolism; AMP biosynthesis via salvage pathway; AMP from adenine: step 1/1. Catalyzes a salvage reaction resulting in the formation of AMP, that is energically less costly than de novo synthesis. The protein is Adenine phosphoribosyltransferase of Microcystis aeruginosa (strain NIES-843 / IAM M-2473).